Here is a 239-residue protein sequence, read N- to C-terminus: Ribonuclease PH (239 aa).

Phosphate-binding positions include arginine 86 and 124–126 (GTR).

The protein belongs to the RNase PH family. As to quaternary structure, homohexameric ring arranged as a trimer of dimers.

It catalyses the reaction tRNA(n+1) + phosphate = tRNA(n) + a ribonucleoside 5'-diphosphate. Phosphorolytic 3'-5' exoribonuclease that plays an important role in tRNA 3'-end maturation. Removes nucleotide residues following the 3'-CCA terminus of tRNAs; can also add nucleotides to the ends of RNA molecules by using nucleoside diphosphates as substrates, but this may not be physiologically important. Probably plays a role in initiation of 16S rRNA degradation (leading to ribosome degradation) during starvation. This Allorhizobium ampelinum (strain ATCC BAA-846 / DSM 112012 / S4) (Agrobacterium vitis (strain S4)) protein is Ribonuclease PH.